The chain runs to 104 residues: MAAKIRKGDKVIVLTGRDKGRTGEVFEVRPDAGTALVRGINLVKRHQKQTQNQEGGIITKEAPINLSNVAYVGKDGKPTRIGFKIQADGKKVRVAKSSGVEIDG.

It belongs to the universal ribosomal protein uL24 family. As to quaternary structure, part of the 50S ribosomal subunit.

One of two assembly initiator proteins, it binds directly to the 5'-end of the 23S rRNA, where it nucleates assembly of the 50S subunit. Its function is as follows. One of the proteins that surrounds the polypeptide exit tunnel on the outside of the subunit. In Bradyrhizobium sp. (strain ORS 278), this protein is Large ribosomal subunit protein uL24.